Here is a 108-residue protein sequence, read N- to C-terminus: Nucleoid-associated protein CHAB381_0200 (108 aa).

It belongs to the YbaB/EbfC family. Homodimer.

It localises to the cytoplasm. It is found in the nucleoid. Functionally, binds to DNA and alters its conformation. May be involved in regulation of gene expression, nucleoid organization and DNA protection. This Campylobacter hominis (strain ATCC BAA-381 / DSM 21671 / CCUG 45161 / LMG 19568 / NCTC 13146 / CH001A) protein is Nucleoid-associated protein CHAB381_0200.